A 408-amino-acid chain; its full sequence is MAISYDLRPVGSCLERKTDNIVVKESSKLSLIGLSQDEIVQALKTVGVPERQTRMRARQLWHWLYVRGVSNFDEMLNISKVMQETLKHHFSIARPEIVGEQISKDGTRKWLLRFPARGAGRPVEIETVYIPEEGRGTLCLSSQVGCTLTCSFCHTGTQMLVRNLTAEEILAQLLVARDCLGDFPDKNTPDGAIVPVEGRKVTNIVMMGMGEPLYNYEAVKKALLIASDGDGLSLSKRRITLSTSGVVPGIIRTGEEIGVMLAISLHAVHDTVRDMLVPINKKYPLTLLMDACRNYPGLSNAKRITFEYVMLKDINDSLDDAKRLIQLLKGIPAKINLIPFNPWPGSNYQCSDWEQIERFADVVNQAGYASPIRTPRGRDILAACGQLKSASERLRKSERLKLENAIGH.

Glu126 serves as the catalytic Proton acceptor. The region spanning 132–373 (EEGRGTLCLS…NQAGYASPIR (242 aa)) is the Radical SAM core domain. Cys139 and Cys384 are disulfide-bonded. Cys146, Cys150, and Cys153 together coordinate [4Fe-4S] cluster. Residues 210–211 (GE), Ser242, 264–266 (SLH), and Asn341 each bind S-adenosyl-L-methionine. Cys384 serves as the catalytic S-methylcysteine intermediate.

The protein belongs to the radical SAM superfamily. RlmN family. The cofactor is [4Fe-4S] cluster.

It is found in the cytoplasm. It carries out the reaction adenosine(2503) in 23S rRNA + 2 reduced [2Fe-2S]-[ferredoxin] + 2 S-adenosyl-L-methionine = 2-methyladenosine(2503) in 23S rRNA + 5'-deoxyadenosine + L-methionine + 2 oxidized [2Fe-2S]-[ferredoxin] + S-adenosyl-L-homocysteine. The enzyme catalyses adenosine(37) in tRNA + 2 reduced [2Fe-2S]-[ferredoxin] + 2 S-adenosyl-L-methionine = 2-methyladenosine(37) in tRNA + 5'-deoxyadenosine + L-methionine + 2 oxidized [2Fe-2S]-[ferredoxin] + S-adenosyl-L-homocysteine. Specifically methylates position 2 of adenine 2503 in 23S rRNA and position 2 of adenine 37 in tRNAs. m2A2503 modification seems to play a crucial role in the proofreading step occurring at the peptidyl transferase center and thus would serve to optimize ribosomal fidelity. This chain is Dual-specificity RNA methyltransferase RlmN, found in Bartonella tribocorum (strain CIP 105476 / IBS 506).